Consider the following 260-residue polypeptide: Acetylglutamate kinase (260 aa).

Substrate is bound by residues 46–47, arginine 68, and asparagine 160; that span reads GG.

It belongs to the acetylglutamate kinase family. ArgB subfamily.

The protein localises to the cytoplasm. The catalysed reaction is N-acetyl-L-glutamate + ATP = N-acetyl-L-glutamyl 5-phosphate + ADP. The protein operates within amino-acid biosynthesis; L-arginine biosynthesis; N(2)-acetyl-L-ornithine from L-glutamate: step 2/4. Functionally, catalyzes the ATP-dependent phosphorylation of N-acetyl-L-glutamate. The polypeptide is Acetylglutamate kinase (Shewanella sp. (strain MR-4)).